The sequence spans 337 residues: Schlafen family member 1 (337 aa).

The segment at Ala-147 to Glu-166 is disordered. The span at Pro-156–Glu-166 shows a compositional bias: basic and acidic residues.

It belongs to the Schlafen family. In terms of assembly, interacts with DNAJB6; promoting nuclear translocation and ability to promote cell-cycle arrest. Mainly expressed in the thymus, lymph node and spleen. Specifically expressed in T-lineage cells, but not in B-cells. Strongly up-regulated during the differentiation from CD4(+)CD8(+) double-positive (DP) to CD4(+) or CD8(+) single-positive (SP) thymocytes. Highly expressed in quiescent single-positive thymocytes and T-cells. The expression substantially decreases after TCR (T-cell receptor)-mediated activation.

It is found in the cytoplasm. Its subcellular location is the nucleus. Its function is as follows. Protein expressed in resting T-cells, which is required for maintaining T-cells in the quiescent state. Acts by promoting cell-cycle arrest of T-cells through inhibiting the expression of cyclin-D1 (CCND1). The protein is Schlafen family member 1 of Mus musculus (Mouse).